A 306-amino-acid chain; its full sequence is Acetyl-coenzyme A carboxylase carboxyl transferase subunit beta (306 aa).

Residues 25-294 (VWTKCDSCGQ…PQDPLPHEPR (270 aa)) enclose the CoA carboxyltransferase N-terminal domain. Zn(2+) is bound by residues cysteine 29, cysteine 32, cysteine 48, and cysteine 51. Residues 29-51 (CDSCGQVLYRAELERNLEVCPKC) form a C4-type zinc finger. Residues 281–306 (NRPQPQDPLPHEPRPDAVPEDHQDEV) are disordered. Over residues 289–306 (LPHEPRPDAVPEDHQDEV) the composition is skewed to basic and acidic residues.

The protein belongs to the AccD/PCCB family. In terms of assembly, acetyl-CoA carboxylase is a heterohexamer composed of biotin carboxyl carrier protein (AccB), biotin carboxylase (AccC) and two subunits each of ACCase subunit alpha (AccA) and ACCase subunit beta (AccD). Zn(2+) is required as a cofactor.

It localises to the cytoplasm. It carries out the reaction N(6)-carboxybiotinyl-L-lysyl-[protein] + acetyl-CoA = N(6)-biotinyl-L-lysyl-[protein] + malonyl-CoA. Its pathway is lipid metabolism; malonyl-CoA biosynthesis; malonyl-CoA from acetyl-CoA: step 1/1. Component of the acetyl coenzyme A carboxylase (ACC) complex. Biotin carboxylase (BC) catalyzes the carboxylation of biotin on its carrier protein (BCCP) and then the CO(2) group is transferred by the transcarboxylase to acetyl-CoA to form malonyl-CoA. The protein is Acetyl-coenzyme A carboxylase carboxyl transferase subunit beta of Sodalis glossinidius (strain morsitans).